The sequence spans 380 residues: Putative F-box/kelch-repeat protein At2g44030 (380 aa).

The 51-residue stretch at Pro-16–Leu-66 folds into the F-box domain. Kelch repeat units lie at residues Glu-123 to Gly-170 and Ile-172 to Lys-219.

The chain is Putative F-box/kelch-repeat protein At2g44030 from Arabidopsis thaliana (Mouse-ear cress).